Consider the following 171-residue polypeptide: MTTSLPFVLANHGFALNFNVFETNLINLVLVIALLVYFLKGFLGGILERRREAILADLKDAEERLVTASKALEEGQRELAQAKSTAEKILAEAKQRADLIREDGEKRTIEEMARIKQDANANLNAEAARVIEALRAETARTAIDKALAALPKRLNDAKRAELIDRSIEALG.

Residues 26-46 (INLVLVIALLVYFLKGFLGGI) form a helical membrane-spanning segment.

It belongs to the ATPase B chain family. F-type ATPases have 2 components, F(1) - the catalytic core - and F(0) - the membrane proton channel. F(1) has five subunits: alpha(3), beta(3), gamma(1), delta(1), epsilon(1). F(0) has four main subunits: a(1), b(1), b'(1) and c(10-14). The alpha and beta chains form an alternating ring which encloses part of the gamma chain. F(1) is attached to F(0) by a central stalk formed by the gamma and epsilon chains, while a peripheral stalk is formed by the delta, b and b' chains.

It is found in the cellular thylakoid membrane. Its function is as follows. F(1)F(0) ATP synthase produces ATP from ADP in the presence of a proton or sodium gradient. F-type ATPases consist of two structural domains, F(1) containing the extramembraneous catalytic core and F(0) containing the membrane proton channel, linked together by a central stalk and a peripheral stalk. During catalysis, ATP synthesis in the catalytic domain of F(1) is coupled via a rotary mechanism of the central stalk subunits to proton translocation. Component of the F(0) channel, it forms part of the peripheral stalk, linking F(1) to F(0). The polypeptide is ATP synthase subunit b (Synechococcus sp. (strain RCC307)).